The primary structure comprises 801 residues: Interleukin-4 receptor subunit alpha (801 aa).

A signal peptide spans 1 to 25 (MGWLCTKFLSSVSCLILLWVTGSGG). At 26–232 (IKVLGDPTCF…NHFQLPLLQR (207 aa)) the chain is on the extracellular side. Residues Cys-34 and Cys-44 are joined by a disulfide bond. Asn-71 carries an N-linked (GlcNAc...) asparagine glycan. Cys-74 and Cys-86 are disulfide-bonded. Residues 125–223 (APDNLTLHTN…EWSPSITWYN (99 aa)) enclose the Fibronectin type-III domain. Residues Asn-128, Asn-134, and Asn-162 are each glycosylated (N-linked (GlcNAc...) asparagine). Ser-164 is modified (phosphoserine). Asn-176 carries an N-linked (GlcNAc...) asparagine glycan. Residues 212-216 (WSEWS) carry the WSXWS motif motif. The helical transmembrane segment at 233–256 (LPLGVSISCICILLFCLTCYFSII) threads the bilayer. Residues 257–801 (KIKKIWWDQI…PVGTLGVTVS (545 aa)) are Cytoplasmic-facing. A Box 1 motif motif is present at residues 262 to 270 (WWDQIPTPA). The interval 424-476 (VGQSSMAESSSLLPSESGQASTSWACFPTGPSETTCQVTGQQPPHPDPERATG) is disordered. Residues 426–444 (QSSMAESSSLLPSESGQAS) show a composition bias toward low complexity. Residues 439-549 (ESGQASTSWA…ESWEQILHMS (111 aa)) form a required for IRS1 activation and IL4-induced cell growth region. Residues 454–465 (PSETTCQVTGQQ) are compositionally biased toward polar residues. The residue at position 492 (Tyr-492) is a Phosphotyrosine. The tract at residues 493 to 515 (RSFSDFSSPAPNPGELASEQKQA) is disordered. The segment at 549-644 (SVLQHGTAGS…NSMPLFTFGL (96 aa)) is required for IL4-induced gene expression. Phosphotyrosine is present on residues Tyr-566, Tyr-594, and Tyr-622. The ITIM motif signature appears at 698–703 (IVYSSL). Residues 767–801 (RTPSNLSGVGKGPGHSPVPSQTTEVPVGTLGVTVS) form a disordered region.

Belongs to the type I cytokine receptor family. Type 4 subfamily. As to quaternary structure, the functional IL4 receptor is formed by initial binding of IL4 to IL4R. Subsequent recruitment to the complex of the common gamma chain, in immune cells, creates a type I receptor and, in non-immune cells, of IL13RA1 forms a type II receptor. IL4R can also interact with the IL13/IL13RA1 complex to form a similar type II receptor. Interacts with PIK3C3. Interacts with the SH2-containing phosphatases, PTPN6/SHIP1, PTPN11/SHIP2 and INPP5D/SHIP. Interacts with JAK1 through a Box 1-containing region; inhibited by SOCS5. Interacts with SOCS5; inhibits IL4 signaling. Interacts with JAK3. Interacts with CLM1. Interacts with IL13RA2. On IL4 binding, phosphorylated on C-terminal tyrosine residues. Isoform 2 is expressed in kidney, spleen, lung and liver.

It is found in the cell membrane. The protein localises to the secreted. Its function is as follows. Receptor for both interleukin 4 and interleukin 13. Couples to the JAK1/2/3-STAT6 pathway. The IL4 response is involved in promoting Th2 differentiation. The IL4/IL13 responses are involved in regulating IgE production and, chemokine and mucus production at sites of allergic inflammation. In certain cell types, can signal through activation of insulin receptor substrates, IRS1/IRS2. Isoform 2 (soluble form) inhibits IL4-induced spleen cell proliferation. The chain is Interleukin-4 receptor subunit alpha (Il4r) from Rattus norvegicus (Rat).